The chain runs to 233 residues: 27 kDa hemolymph glycoprotein (233 aa).

The first 17 residues, 1-17 (MIWKTLIVAFMATAVLA), serve as a signal peptide directing secretion. 2 N-linked (GlcNAc...) asparagine glycosylation sites follow: asparagine 125 and asparagine 156.

This sequence belongs to the UPF0408 family. In terms of processing, N-glycosylated. Hemolymph.

The protein resides in the secreted. In Manduca sexta (Tobacco hawkmoth), this protein is 27 kDa hemolymph glycoprotein.